The sequence spans 949 residues: Translation initiation factor IF-2 (949 aa).

Disordered stretches follow at residues 46 to 82 (LTASRPAESGPEEVRVTTNIVRRRSRPSAAAEPEAEA), 145 to 176 (EPAVAQEASPAVTAAKPVPATPAAPPQPERAS), and 188 to 361 (IPIT…KTEL). Low complexity predominate over residues 152–162 (ASPAVTAAKPV). Residues 163-172 (PATPAAPPQP) are compositionally biased toward pro residues. Positions 263–276 (PRDAAAPRPAGARP) are enriched in low complexity. Basic and acidic residues predominate over residues 334–344 (SREERQFDPFH). The tr-type G domain occupies 449 to 618 (ERPPVVTIMG…LLQADLMDLK (170 aa)). Residues 458-465 (GHVDHGKT) form a G1 region. 458–465 (GHVDHGKT) provides a ligand contact to GTP. Residues 483 to 487 (GITQH) are G2. The G3 stretch occupies residues 504-507 (DTPG). Residues 504-508 (DTPGH) and 558-561 (NKID) contribute to the GTP site. Residues 558–561 (NKID) form a G4 region. A G5 region spans residues 594–596 (SAK).

Belongs to the TRAFAC class translation factor GTPase superfamily. Classic translation factor GTPase family. IF-2 subfamily.

Its subcellular location is the cytoplasm. Functionally, one of the essential components for the initiation of protein synthesis. Protects formylmethionyl-tRNA from spontaneous hydrolysis and promotes its binding to the 30S ribosomal subunits. Also involved in the hydrolysis of GTP during the formation of the 70S ribosomal complex. The protein is Translation initiation factor IF-2 of Trichlorobacter lovleyi (strain ATCC BAA-1151 / DSM 17278 / SZ) (Geobacter lovleyi).